Reading from the N-terminus, the 350-residue chain is Deoxyhypusine synthase-like protein (350 aa).

The protein belongs to the deoxyhypusine synthase family.

In Chlorobaculum tepidum (strain ATCC 49652 / DSM 12025 / NBRC 103806 / TLS) (Chlorobium tepidum), this protein is Deoxyhypusine synthase-like protein.